The chain runs to 541 residues: Reticulophagy regulator 2 (541 aa).

The next 3 helical transmembrane spans lie at 75-91 (LHSLVTAATLNGLFWLL), 99-115 (FFLLSISLLTYFLLDLW), and 199-219 (VPGIMISYIVLLSILLWPLVV). Residues 249–282 (LHHKHDKRKRQGKNAPPAGDEPLAETESESEAEL) form a disordered region. Basic residues predominate over residues 250 to 260 (HHKHDKRKRQG). The span at 270–280 (PLAETESESEA) shows a compositional bias: acidic residues. Residue T274 is modified to Phosphothreonine. S276, S278, S286, and S306 each carry phosphoserine. At T329 the chain carries Phosphothreonine. Disordered stretches follow at residues 331–389 (VSED…ADKE), 403–440 (THFNGAGSPQEGVKCPPGGPVETLSPEAVSGDLMAPSS), and 459–481 (PSVLPSLPQDSPQALTAPEEEEA). Phosphoserine is present on residues S332, S339, and S342. Positions 459 to 475 (PSVLPSLPQDSPQALTA) are enriched in low complexity. The short motif at 485 to 490 (EDFELL) is the LIR motif element. The interval 496–541 (EQLNAELGLGPEMPPKPPDVLPPPPLGPDSHSLVQSDQEAHAVVEP) is disordered. Residues 507–522 (EMPPKPPDVLPPPPLG) show a composition bias toward pro residues.

It belongs to the RETREG family. Interacts with ATG8 family modifier proteins MAP1LC3A, MAP1LC3B, GABARAP, GABARAPL1 and GABARAPL2. Interacts with CANX.

The protein localises to the endoplasmic reticulum membrane. In terms of biological role, endoplasmic reticulum (ER)-anchored autophagy regulator which exists in an inactive state under basal conditions but is activated following cellular stress. When activated, induces ER fragmentation and mediates ER delivery into lysosomes through sequestration into autophagosomes via interaction with ATG8 family proteins. Required for collagen quality control in a LIR motif-independent manner. The sequence is that of Reticulophagy regulator 2 (Retreg2) from Rattus norvegicus (Rat).